The following is a 621-amino-acid chain: Chaperone protein HtpG (621 aa).

Residues 1-341 (MSNQEYTFQT…SEDLPLNVSR (341 aa)) are a; substrate-binding. Residues 342-547 (EILQQNKILA…GDEQNAMMAN (206 aa)) form a b region. The interval 548 to 621 (FMRQMGQSVP…RLNSVLLKAL (74 aa)) is c.

Belongs to the heat shock protein 90 family. As to quaternary structure, homodimer.

The protein localises to the cytoplasm. Molecular chaperone. Has ATPase activity. This is Chaperone protein HtpG from Helicobacter pylori (strain HPAG1).